We begin with the raw amino-acid sequence, 335 residues long: RNA polymerase sigma factor RpoS (335 aa).

Positions 57 to 90 are sigma-70 factor domain-1; it reads DATQMYLSEIGFSPLLTAEEEVLYARRALRGDEA. The segment at 95–165 is sigma-70 factor domain-2; sequence MIESNLRLVV…ERALMNQTRT (71 aa). An Interaction with polymerase core subunit RpoC motif is present at residues 119–122; sequence DLIE. Positions 175–250 are sigma-70 factor domain-3; it reads ELNIYLRTAR…DSHNADPEFS (76 aa). Residues 263–316 are sigma-70 factor domain-4; the sequence is WLDELNPKQKEVLARRFGLLGYEPSTLEEVGREINLTRERVRQIQVEGLRRLRE. Residues 289-308 constitute a DNA-binding region (H-T-H motif); it reads LEEVGREINLTRERVRQIQV.

It belongs to the sigma-70 factor family. RpoS subfamily. Interacts with the RNA polymerase core enzyme.

The protein resides in the cytoplasm. Functionally, sigma factors are initiation factors that promote the attachment of RNA polymerase to specific initiation sites and are then released. This sigma factor is the master transcriptional regulator of the stationary phase and the general stress response. May be required for the persistence of V.cholerae in aquatic habitats. This chain is RNA polymerase sigma factor RpoS, found in Vibrio cholerae serotype O1 (strain ATCC 39315 / El Tor Inaba N16961).